Reading from the N-terminus, the 334-residue chain is Holliday junction branch migration complex subunit RuvB (334 aa).

The segment at 1-179 (MTHKISVLHQ…FAFTGRVDYY (179 aa)) is large ATPase domain (RuvB-L). Residues leucine 18, arginine 19, glycine 60, lysine 63, threonine 64, serine 65, 126 to 128 (EDF), arginine 169, tyrosine 179, and arginine 216 each bind ATP. Threonine 64 lines the Mg(2+) pocket. The tract at residues 180–250 (TDEDLVSILS…VAEKALAMLL (71 aa)) is small ATPAse domain (RuvB-S). Positions 253–334 (NLGLNEIDIK…RNPKDRWGEE (82 aa)) are head domain (RuvB-H). Residues arginine 308 and arginine 313 each coordinate DNA.

This sequence belongs to the RuvB family. Homohexamer. Forms an RuvA(8)-RuvB(12)-Holliday junction (HJ) complex. HJ DNA is sandwiched between 2 RuvA tetramers; dsDNA enters through RuvA and exits via RuvB. An RuvB hexamer assembles on each DNA strand where it exits the tetramer. Each RuvB hexamer is contacted by two RuvA subunits (via domain III) on 2 adjacent RuvB subunits; this complex drives branch migration. In the full resolvosome a probable DNA-RuvA(4)-RuvB(12)-RuvC(2) complex forms which resolves the HJ.

The protein resides in the cytoplasm. The catalysed reaction is ATP + H2O = ADP + phosphate + H(+). Functionally, the RuvA-RuvB-RuvC complex processes Holliday junction (HJ) DNA during genetic recombination and DNA repair, while the RuvA-RuvB complex plays an important role in the rescue of blocked DNA replication forks via replication fork reversal (RFR). RuvA specifically binds to HJ cruciform DNA, conferring on it an open structure. The RuvB hexamer acts as an ATP-dependent pump, pulling dsDNA into and through the RuvAB complex. RuvB forms 2 homohexamers on either side of HJ DNA bound by 1 or 2 RuvA tetramers; 4 subunits per hexamer contact DNA at a time. Coordinated motions by a converter formed by DNA-disengaged RuvB subunits stimulates ATP hydrolysis and nucleotide exchange. Immobilization of the converter enables RuvB to convert the ATP-contained energy into a lever motion, pulling 2 nucleotides of DNA out of the RuvA tetramer per ATP hydrolyzed, thus driving DNA branch migration. The RuvB motors rotate together with the DNA substrate, which together with the progressing nucleotide cycle form the mechanistic basis for DNA recombination by continuous HJ branch migration. Branch migration allows RuvC to scan DNA until it finds its consensus sequence, where it cleaves and resolves cruciform DNA. This chain is Holliday junction branch migration complex subunit RuvB, found in Chlamydia trachomatis serovar L2 (strain ATCC VR-902B / DSM 19102 / 434/Bu).